Here is a 297-residue protein sequence, read N- to C-terminus: tRNA-cytidine(32) 2-sulfurtransferase (297 aa).

Residues S61–S66 carry the PP-loop motif motif. [4Fe-4S] cluster-binding residues include C136, C139, and C227.

Belongs to the TtcA family. Homodimer. The cofactor is Mg(2+). [4Fe-4S] cluster serves as cofactor.

Its subcellular location is the cytoplasm. The catalysed reaction is cytidine(32) in tRNA + S-sulfanyl-L-cysteinyl-[cysteine desulfurase] + AH2 + ATP = 2-thiocytidine(32) in tRNA + L-cysteinyl-[cysteine desulfurase] + A + AMP + diphosphate + H(+). It functions in the pathway tRNA modification. Its function is as follows. Catalyzes the ATP-dependent 2-thiolation of cytidine in position 32 of tRNA, to form 2-thiocytidine (s(2)C32). The sulfur atoms are provided by the cysteine/cysteine desulfurase (IscS) system. In Paracoccus denitrificans (strain Pd 1222), this protein is tRNA-cytidine(32) 2-sulfurtransferase.